A 458-amino-acid polypeptide reads, in one-letter code: UDP-N-acetylmuramoylalanine--D-glutamate ligase (458 aa).

G124 to T130 is an ATP binding site.

Belongs to the MurCDEF family.

It is found in the cytoplasm. The enzyme catalyses UDP-N-acetyl-alpha-D-muramoyl-L-alanine + D-glutamate + ATP = UDP-N-acetyl-alpha-D-muramoyl-L-alanyl-D-glutamate + ADP + phosphate + H(+). Its pathway is cell wall biogenesis; peptidoglycan biosynthesis. Functionally, cell wall formation. Catalyzes the addition of glutamate to the nucleotide precursor UDP-N-acetylmuramoyl-L-alanine (UMA). The polypeptide is UDP-N-acetylmuramoylalanine--D-glutamate ligase (Clostridium botulinum (strain 657 / Type Ba4)).